A 602-amino-acid chain; its full sequence is Aspartate--tRNA(Asp/Asn) ligase (602 aa).

Glu-175 is an L-aspartate binding site. The interval 199–202 (QIFK) is aspartate. L-aspartate is bound at residue Arg-221. ATP-binding positions include 221–223 (RDE) and Gln-230. Residue His-458 coordinates L-aspartate. Glu-492 is a binding site for ATP. Arg-499 contributes to the L-aspartate binding site. Residue 544 to 547 (GLDR) coordinates ATP.

This sequence belongs to the class-II aminoacyl-tRNA synthetase family. Type 1 subfamily. Homodimer.

The protein localises to the cytoplasm. It catalyses the reaction tRNA(Asx) + L-aspartate + ATP = L-aspartyl-tRNA(Asx) + AMP + diphosphate. In terms of biological role, aspartyl-tRNA synthetase with relaxed tRNA specificity since it is able to aspartylate not only its cognate tRNA(Asp) but also tRNA(Asn). Reaction proceeds in two steps: L-aspartate is first activated by ATP to form Asp-AMP and then transferred to the acceptor end of tRNA(Asp/Asn). This Cupriavidus taiwanensis (strain DSM 17343 / BCRC 17206 / CCUG 44338 / CIP 107171 / LMG 19424 / R1) (Ralstonia taiwanensis (strain LMG 19424)) protein is Aspartate--tRNA(Asp/Asn) ligase.